A 319-amino-acid chain; its full sequence is L-lactate dehydrogenase 2 (319 aa).

Residues V16, D37, K42, Y68, and 82 to 83 (GA) each bind NAD(+). Q85 and R91 together coordinate substrate. Residues S104, 121-123 (AAN), and S146 contribute to the NAD(+) site. 123–126 (NPVD) contributes to the substrate binding site. 151–154 (DSAR) is a substrate binding site. H178 acts as the Proton acceptor in catalysis. The residue at position 222 (Y222) is a Phosphotyrosine. T231 contributes to the substrate binding site.

The protein belongs to the LDH/MDH superfamily. LDH family. As to quaternary structure, homotetramer.

It is found in the cytoplasm. It catalyses the reaction (S)-lactate + NAD(+) = pyruvate + NADH + H(+). It participates in fermentation; pyruvate fermentation to lactate; (S)-lactate from pyruvate: step 1/1. Functionally, catalyzes the conversion of lactate to pyruvate (Potential). Contributes to S.aureus growth during nitrosative stress in both aerobically and anaerobically cultured cells, despite playing a secondary role in this resistance mechanism. This Staphylococcus aureus (strain USA300) protein is L-lactate dehydrogenase 2.